The following is a 160-amino-acid chain: NADH-quinone oxidoreductase subunit B (160 aa).

Residues C37, C38, C102, and C132 each coordinate [4Fe-4S] cluster.

Belongs to the complex I 20 kDa subunit family. As to quaternary structure, NDH-1 is composed of 14 different subunits. Subunits NuoB, C, D, E, F, and G constitute the peripheral sector of the complex. It depends on [4Fe-4S] cluster as a cofactor.

The protein resides in the cell inner membrane. The catalysed reaction is a quinone + NADH + 5 H(+)(in) = a quinol + NAD(+) + 4 H(+)(out). Functionally, NDH-1 shuttles electrons from NADH, via FMN and iron-sulfur (Fe-S) centers, to quinones in the respiratory chain. Couples the redox reaction to proton translocation (for every two electrons transferred, four hydrogen ions are translocated across the cytoplasmic membrane), and thus conserves the redox energy in a proton gradient. The polypeptide is NADH-quinone oxidoreductase subunit B (Neisseria meningitidis serogroup A / serotype 4A (strain DSM 15465 / Z2491)).